The following is a 296-amino-acid chain: Cytidine deaminase (296 aa).

CMP/dCMP-type deaminase domains lie at 47-167 (TEAE…FGPK) and 186-296 (DSSD…VDPV). 88-90 (NLE) provides a ligand contact to substrate. Histidine 101 lines the Zn(2+) pocket. Residue glutamate 103 is the Proton donor of the active site. Positions 128 and 131 each coordinate Zn(2+).

The protein belongs to the cytidine and deoxycytidylate deaminase family. As to quaternary structure, homodimer. Zn(2+) serves as cofactor.

The catalysed reaction is cytidine + H2O + H(+) = uridine + NH4(+). The enzyme catalyses 2'-deoxycytidine + H2O + H(+) = 2'-deoxyuridine + NH4(+). In terms of biological role, this enzyme scavenges exogenous and endogenous cytidine and 2'-deoxycytidine for UMP synthesis. In Shewanella sp. (strain ANA-3), this protein is Cytidine deaminase.